A 69-amino-acid chain; its full sequence is MRTLIREHRKELGLTQEELAERVGVTRQTIIALEKGRYSPSLILAHRIARALGREHIEDIFILDEDGAK.

In terms of domain architecture, HTH cro/C1-type spans 5–60 (IREHRKELGLTQEELAERVGVTRQTIIALEKGRYSPSLILAHRIARALGREHIEDI). A DNA-binding region (H-T-H motif) is located at residues 16–35 (QEELAERVGVTRQTIIALEK).

This is an uncharacterized protein from Methanothermobacter thermautotrophicus (strain ATCC 29096 / DSM 1053 / JCM 10044 / NBRC 100330 / Delta H) (Methanobacterium thermoautotrophicum).